A 360-amino-acid polypeptide reads, in one-letter code: Phospho-N-acetylmuramoyl-pentapeptide-transferase (360 aa).

At 1 to 25 the chain is on the periplasmic side; sequence MLVWLAEHLVKYYSGFNVFSYLTFR. A helical transmembrane segment spans residues 26 to 46; the sequence is AIVSLLTALFISLWMGPRMIA. Topologically, residues 47–71 are cytoplasmic; the sequence is RLQKLSFGQVVRNDGPESHFSKRGT. Residues 72–92 traverse the membrane as a helical segment; that stretch reads PTMGGIMILTAIVISVLLWAY. Residue proline 93 is a topological domain, periplasmic. A helical transmembrane segment spans residues 94-114; it reads SNPYVWCVLVVLIGYGIIGFV. The Cytoplasmic segment spans residues 115–131; that stretch reads DDYHKVVRKDTKGLIAR. The chain crosses the membrane as a helical span at residues 132-152; it reads WKYFWMSVIALGVAFALYLVG. Residues 153-167 lie on the Periplasmic side of the membrane; sequence KDTPATQLVVPFFKD. A helical membrane pass occupies residues 168 to 188; it reads VMPQLGLFYILLSYFVIVGTG. Over 189-198 the chain is Cytoplasmic; sequence NAVNLTDGLD. A helical membrane pass occupies residues 199–219; that stretch reads GLAIMPTVFVAAGFALVAWAT. Residues 220–235 lie on the Periplasmic side of the membrane; that stretch reads GNMNFANYLHIPYLRY. Residues 236–256 form a helical membrane-spanning segment; that stretch reads AGELVIVCTAIVGAGLGFLWF. The Cytoplasmic portion of the chain corresponds to 257–262; that stretch reads NTYPAQ. Residues 263–283 form a helical membrane-spanning segment; sequence VFMGDVGSLALGGALGIIAVL. The Periplasmic segment spans residues 284-287; it reads LRQE. A helical membrane pass occupies residues 288–308; that stretch reads FLLVIMGGVFVVETLSVILQV. Residues 309–337 lie on the Cytoplasmic side of the membrane; that stretch reads GSFKLRGQRIFRMAPIHHHYELKGWPEPR. A helical membrane pass occupies residues 338–358; it reads VIVRFWIISLMLVLIGLATLK. At 359 to 360 the chain is on the periplasmic side; that stretch reads VR.

It belongs to the glycosyltransferase 4 family. MraY subfamily. The cofactor is Mg(2+).

It is found in the cell inner membrane. It carries out the reaction UDP-N-acetyl-alpha-D-muramoyl-L-alanyl-gamma-D-glutamyl-meso-2,6-diaminopimeloyl-D-alanyl-D-alanine + di-trans,octa-cis-undecaprenyl phosphate = di-trans,octa-cis-undecaprenyl diphospho-N-acetyl-alpha-D-muramoyl-L-alanyl-D-glutamyl-meso-2,6-diaminopimeloyl-D-alanyl-D-alanine + UMP. It participates in cell wall biogenesis; peptidoglycan biosynthesis. Its function is as follows. Catalyzes the initial step of the lipid cycle reactions in the biosynthesis of the cell wall peptidoglycan: transfers peptidoglycan precursor phospho-MurNAc-pentapeptide from UDP-MurNAc-pentapeptide onto the lipid carrier undecaprenyl phosphate, yielding undecaprenyl-pyrophosphoryl-MurNAc-pentapeptide, known as lipid I. This Salmonella paratyphi A (strain ATCC 9150 / SARB42) protein is Phospho-N-acetylmuramoyl-pentapeptide-transferase.